The sequence spans 367 residues: Peptide chain release factor 2 (367 aa).

Residue Gln254 is modified to N5-methylglutamine.

Belongs to the prokaryotic/mitochondrial release factor family. In terms of processing, methylated by PrmC. Methylation increases the termination efficiency of RF2.

The protein localises to the cytoplasm. Functionally, peptide chain release factor 2 directs the termination of translation in response to the peptide chain termination codons UGA and UAA. This Leptospira interrogans serogroup Icterohaemorrhagiae serovar copenhageni (strain Fiocruz L1-130) protein is Peptide chain release factor 2.